The sequence spans 175 residues: tRNA (cytidine(56)-2'-O)-methyltransferase (175 aa).

L82 serves as a coordination point for S-adenosyl-L-methionine.

This sequence belongs to the aTrm56 family. In terms of assembly, homodimer.

It localises to the cytoplasm. It catalyses the reaction cytidine(56) in tRNA + S-adenosyl-L-methionine = 2'-O-methylcytidine(56) in tRNA + S-adenosyl-L-homocysteine + H(+). Its function is as follows. Specifically catalyzes the AdoMet-dependent 2'-O-ribose methylation of cytidine at position 56 in tRNAs. In Cenarchaeum symbiosum (strain A), this protein is tRNA (cytidine(56)-2'-O)-methyltransferase.